We begin with the raw amino-acid sequence, 597 residues long: MNTGISPKQDDASNSNLLNIGQDHSLQYQGLEHNDSQYRDASHQTPHQYLNQFQAQPQQQQQQQQQQQQQQQQAPYQGHFQQSPQQQQQNVYYPLPPQSLTQPTSQSQQQQQQQQQQQYANSNSNSNNNVNVNALPQDFGYMQQTGSGQNYPTINQQQFSEFYNSFLSHLTQKQTNPSVTGTGASSNNNSNNNNVSSGNNSTSSNPAQLAASQLNPATAAAAAANNAAGPASYLSQLPQVQRYYPNNMNALSSLLDPSSAGNAAGNANTATHPGLLPPNLQPQLTHHQQQMQQQLQLQQQQQLQQQQQLQQQHQLQQQQQLQQQHHHLQQQQQQQQHPVVKKLSSTQSRIERRKQLKKQGPKRPSSAYFLFSMSIRNELLQQFPEAKVPELSKLASARWKELTDDQKKPFYEEFRTNWEKYRVVRDAYEKTLPPKRPSGPFIQFTQEIRPTVVKENPDKGLIEITKIIGERWRELDPAKKAEYTETYKKRLKEWESCYPDENDPNGNPTGHSHKAMNMNLNMDTKIMENQDSIEHITANAIDSVTGSNSNSTNPNTPVSPPISLQQQPLQQQQQQQQQQQHMLLADPTTNGSIIKNE.

The span at methionine 1–tyrosine 28 shows a compositional bias: polar residues. Disordered regions lie at residues methionine 1 to alanine 134, glutamine 174 to serine 212, serine 259 to methionine 291, and histidine 327 to proline 364. Residues glutamate 32–serine 42 are compositionally biased toward basic and acidic residues. Composition is skewed to low complexity over residues glutamine 52–alanine 134, serine 178–serine 212, alanine 260–threonine 271, glutamine 281–methionine 291, and histidine 327–histidine 337. Over residues glutamate 351–proline 361 the composition is skewed to basic residues. 2 consecutive DNA-binding regions (HMG box) follow at residues proline 361 to glutamate 429 and proline 434 to asparagine 502. Position 532 is a phosphoserine (serine 532). Composition is skewed to low complexity over residues serine 543 to threonine 556 and leucine 564 to glutamine 580. Residues serine 543–glutamate 597 are disordered. Residues proline 587–glutamate 597 show a composition bias toward polar residues.

The protein localises to the nucleus. Its function is as follows. Binds to platinated DNA and confers sensitivity to the anticancer drug cisplatin. Activate the expression of the COX5B gene. This is Intrastrand cross-link recognition protein (IXR1) from Saccharomyces cerevisiae (strain ATCC 204508 / S288c) (Baker's yeast).